Consider the following 364-residue polypeptide: Ribosomal RNA large subunit methyltransferase F (364 aa).

The disordered stretch occupies residues 1–52 (MPKPAIKTAAKLAMSSAGKRGKPSTPKSLAKPQTTKPKTASKLKAKHGEQKR). Positions 25-38 (TPKSLAKPQTTKPK) are enriched in polar residues.

Belongs to the methyltransferase superfamily. METTL16/RlmF family.

The protein localises to the cytoplasm. The catalysed reaction is adenosine(1618) in 23S rRNA + S-adenosyl-L-methionine = N(6)-methyladenosine(1618) in 23S rRNA + S-adenosyl-L-homocysteine + H(+). Its function is as follows. Specifically methylates the adenine in position 1618 of 23S rRNA. The chain is Ribosomal RNA large subunit methyltransferase F from Shewanella sp. (strain ANA-3).